Consider the following 214-residue polypeptide: Probable transaldolase (214 aa).

Catalysis depends on Lys83, which acts as the Schiff-base intermediate with substrate.

Belongs to the transaldolase family. Type 3B subfamily.

Its subcellular location is the cytoplasm. It carries out the reaction D-sedoheptulose 7-phosphate + D-glyceraldehyde 3-phosphate = D-erythrose 4-phosphate + beta-D-fructose 6-phosphate. It functions in the pathway carbohydrate degradation; pentose phosphate pathway; D-glyceraldehyde 3-phosphate and beta-D-fructose 6-phosphate from D-ribose 5-phosphate and D-xylulose 5-phosphate (non-oxidative stage): step 2/3. Transaldolase is important for the balance of metabolites in the pentose-phosphate pathway. This chain is Probable transaldolase, found in Streptococcus equi subsp. zooepidemicus (strain H70).